A 175-amino-acid polypeptide reads, in one-letter code: MRIPTSADIACGGNIIIRIAIKNSDIFILQPLRFCILPWFIARKRSPDSCWWQEYENYPPAFLKPFLFSSGYDQSQRRSRHRAYMHINQLASDLFWNAEFIPAIVHFFPEHRIFQIIFAFWREGFFAAPEARTGKKYRVIDIKPHRHCGTALRGYFQFVRPKPNEWVPVQQAWQR.

This is an uncharacterized protein from Escherichia coli.